The following is a 378-amino-acid chain: Erythronate-4-phosphate dehydrogenase (378 aa).

Residues serine 45 and threonine 66 each contribute to the substrate site. Residues aspartate 146 and threonine 175 each coordinate NAD(+). Residue arginine 208 is part of the active site. Aspartate 232 serves as a coordination point for NAD(+). The active site involves glutamate 237. Catalysis depends on histidine 254, which acts as the Proton donor. Glycine 257 contributes to the NAD(+) binding site. Tyrosine 258 provides a ligand contact to substrate.

The protein belongs to the D-isomer specific 2-hydroxyacid dehydrogenase family. PdxB subfamily. Homodimer.

Its subcellular location is the cytoplasm. The catalysed reaction is 4-phospho-D-erythronate + NAD(+) = (R)-3-hydroxy-2-oxo-4-phosphooxybutanoate + NADH + H(+). Its pathway is cofactor biosynthesis; pyridoxine 5'-phosphate biosynthesis; pyridoxine 5'-phosphate from D-erythrose 4-phosphate: step 2/5. Its function is as follows. Catalyzes the oxidation of erythronate-4-phosphate to 3-hydroxy-2-oxo-4-phosphonooxybutanoate. The chain is Erythronate-4-phosphate dehydrogenase from Pectobacterium atrosepticum (strain SCRI 1043 / ATCC BAA-672) (Erwinia carotovora subsp. atroseptica).